The sequence spans 568 residues: Vacuolar protein 8 (568 aa).

Gly-2 carries N-myristoyl glycine lipidation. S-palmitoyl cysteine attachment occurs at residues Cys-4, Cys-5, and Cys-7. ARM repeat units lie at residues 37-74, 75-114, 116-155, 157-196, 198-237, 241-280, 282-321, 323-363, and 407-446; these read DKDN…FAEI, TEKY…NLAV, NENK…NLAT, DDNK…NMTH, GENR…NIAV, NRRK…NLAS, TGYQ…NISI, PLNE…NLAA, and DNSK…NLCS.

This sequence belongs to the beta-catenin family.

The protein localises to the vacuole membrane. Functions in both vacuole inheritance and protein targeting from the cytoplasm to vacuole. This Eremothecium gossypii (strain ATCC 10895 / CBS 109.51 / FGSC 9923 / NRRL Y-1056) (Yeast) protein is Vacuolar protein 8 (VAC8).